A 211-amino-acid chain; its full sequence is RILP-like protein 2 (211 aa).

The segment at 1–32 is disordered; the sequence is MEEPPVREEEEEEGEEDEERDEVGPEGALGKS. Acidic residues predominate over residues 8–21; sequence EEEEEEGEEDEERD. The 83-residue stretch at 24–106 folds into the RH1 domain; sequence GPEGALGKSP…RKEVEGLRRQ (83 aa). The stretch at 70–164 forms a coiled coil; the sequence is RVLEMLEALV…VQEELQCYKS (95 aa). A Phosphoserine modification is found at Ser107. The region spanning 130 to 201 is the RH2 domain; that stretch reads RPRFTLQELR…NKEEKTIIKK (72 aa). The segment at 166–190 is disordered; that stretch reads LIPPREGPGGRREKDAVVTSAKNAG.

It belongs to the RILPL family. Homodimer. Interacts with RAC1. Interacts (via N-terminus) with MYO5A, the interaction is required for its role in dendrite formation. Interacts with RAB8A; interaction is dependent on the phosphorylation of RAB8A on 'Thr-72'. Interacts with RAB10 and RAB12; interaction is dependent on the phosphorylation of 'Thr-73' on RAB10 and 'Ser-105' on RAB12. Widely expressed. Expressed at higher level in lung.

It is found in the cytoplasm. The protein resides in the cytosol. The protein localises to the cytoskeleton. Its subcellular location is the microtubule organizing center. It localises to the centrosome. It is found in the cell projection. The protein resides in the cilium. Functionally, involved in cell shape and neuronal morphogenesis, positively regulating the establishment and maintenance of dendritic spines. Plays a role in cellular protein transport, including protein transport away from primary cilia. May function via activation of RAC1 and PAK1. The protein is RILP-like protein 2 (RILPL2) of Homo sapiens (Human).